We begin with the raw amino-acid sequence, 529 residues long: Cytochrome P450 monooxygenase 45 (529 aa).

Residues 24-44 form a helical membrane-spanning segment; that stretch reads VLTICILALLTFVLREIVLYF. 2 N-linked (GlcNAc...) asparagine glycosylation sites follow: asparagine 185 and asparagine 322. Cysteine 454 serves as a coordination point for heme.

Belongs to the cytochrome P450 family. Heme serves as cofactor.

It is found in the membrane. It functions in the pathway secondary metabolite biosynthesis. In terms of biological role, cytochrome P450 monooxygenase that is able to use trans-stilbene as a substrate for oxidation. In Postia placenta (strain ATCC 44394 / Madison 698-R) (Brown rot fungus), this protein is Cytochrome P450 monooxygenase 45.